The sequence spans 351 residues: Methionine import ATP-binding protein MetN (351 aa).

Residues 2 to 241 (IVTEALTKAF…PQHAVTRAFV (240 aa)) form the ABC transporter domain. 38–45 (GRSGAGKS) serves as a coordination point for ATP.

Belongs to the ABC transporter superfamily. Methionine importer (TC 3.A.1.24) family. The complex is composed of two ATP-binding proteins (MetN), two transmembrane proteins (MetI) and a solute-binding protein (MetQ).

The protein resides in the cell inner membrane. The enzyme catalyses L-methionine(out) + ATP + H2O = L-methionine(in) + ADP + phosphate + H(+). It catalyses the reaction D-methionine(out) + ATP + H2O = D-methionine(in) + ADP + phosphate + H(+). Part of the ABC transporter complex MetNIQ involved in methionine import. Responsible for energy coupling to the transport system. The chain is Methionine import ATP-binding protein MetN from Rhodospirillum rubrum (strain ATCC 11170 / ATH 1.1.1 / DSM 467 / LMG 4362 / NCIMB 8255 / S1).